Consider the following 513-residue polypeptide: Probable cytosol aminopeptidase (513 aa).

Mn(2+)-binding residues include K277 and D282. The active site involves K289. D300, D359, and E361 together coordinate Mn(2+). R363 is an active-site residue.

The protein belongs to the peptidase M17 family. It depends on Mn(2+) as a cofactor.

It localises to the cytoplasm. The enzyme catalyses Release of an N-terminal amino acid, Xaa-|-Yaa-, in which Xaa is preferably Leu, but may be other amino acids including Pro although not Arg or Lys, and Yaa may be Pro. Amino acid amides and methyl esters are also readily hydrolyzed, but rates on arylamides are exceedingly low.. It carries out the reaction Release of an N-terminal amino acid, preferentially leucine, but not glutamic or aspartic acids.. Its function is as follows. Presumably involved in the processing and regular turnover of intracellular proteins. Catalyzes the removal of unsubstituted N-terminal amino acids from various peptides. The sequence is that of Probable cytosol aminopeptidase from Mycobacterium sp. (strain KMS).